The sequence spans 171 residues: Protein ups1 homolog (171 aa).

A required for mitochondrial targeting region spans residues 1-79 (MTAICTDKTE…LNVNKSYILE (79 aa)). One can recognise a PRELI/MSF1 domain in the interval 2 to 171 (TAICTDKTEL…YVIQQKFQPS (170 aa)).

The protein resides in the mitochondrion inner membrane. The protein localises to the mitochondrion intermembrane space. In terms of biological role, required for maintenance of normal mitochondrial morphology as well as PCP1-dependent processing of MGM1. The polypeptide is Protein ups1 homolog (Schizosaccharomyces pombe (strain 972 / ATCC 24843) (Fission yeast)).